Here is a 44-residue protein sequence, read N- to C-terminus: U4-ctenitoxin-Pk1a (44 aa).

Cystine bridges form between Cys-4–Cys-18, Cys-11–Cys-24, Cys-15–Cys-42, Cys-17–Cys-33, and Cys-26–Cys-31.

In terms of tissue distribution, expressed by the venom gland.

The protein localises to the secreted. In terms of biological role, neurotoxin. Causes spastic paralysis and death in mice within 10 minutes at dose levels of 3 ug per mouse. The polypeptide is U4-ctenitoxin-Pk1a (Phoneutria keyserlingi (Brazilian wandering spider)).